The chain runs to 650 residues: Chaperone protein DnaK (650 aa).

Threonine 200 carries the post-translational modification Phosphothreonine; by autocatalysis.

The protein belongs to the heat shock protein 70 family.

Its function is as follows. Acts as a chaperone. This Burkholderia orbicola (strain MC0-3) protein is Chaperone protein DnaK.